Here is a 550-residue protein sequence, read N- to C-terminus: MDKLRLEVERWLNHPNVNWELKQQIKELNESEIQELFSLEKPLFGTAGVRNKMAPGYHGMNVFSYAYLTQGYVKYIESINEPKRQLRFLVARDTRKNGGLFLETVCDVITSMGHLAYVFDDNQPVSTPLVSHVIFKYGFSGGINITASHNPKDDNGFKVYDHTGAQLLDTQTNQLLSDLPCVTSMLDLELQPNPKFVHTLDNEKVYKNYFRELKKVLVINNNNFKDIKVVFSGLNGTSVCLMQRFLKYLGYSNIISVEEQNWFDENFENAPNLNPEYKDTWILAQKYAKKNNAKLIIMADPDADRFAIAELNNNQWHYFSGNETGAITAYYKLNHKVFKSPYIVSTFVSTYLVNKIAKRYGAFVHRTNVGFKYIGQAINELSQTNELVVGFEEAIGLITSDKLNREKDAYQAAALLLEIARHCKEQNITLLDFYKRILSEFGEYFNLTISHPFKATATDWKEEIKALFNQLINANLTEVAGFKVVKVHLDKQTNILEFGFENGWVKFRFSGTEPKLKFYFDLTNGTREALEKQAKKIYKFFVNLLKLNKA.

Serine 148 (phosphoserine intermediate) is an active-site residue. Residues serine 148, aspartate 300, aspartate 302, and aspartate 304 each coordinate Mg(2+).

It belongs to the phosphohexose mutase family. The cofactor is Mg(2+).

The catalysed reaction is alpha-D-mannose 1-phosphate = D-mannose 6-phosphate. The chain is Phosphomannomutase (manB) from Mycoplasma genitalium (strain ATCC 33530 / DSM 19775 / NCTC 10195 / G37) (Mycoplasmoides genitalium).